A 275-amino-acid polypeptide reads, in one-letter code: Large ribosomal subunit protein uL2c (275 aa).

Disordered regions lie at residues 32-53 (SLSK…TCRH) and 218-242 (PTVR…APIG).

This sequence belongs to the universal ribosomal protein uL2 family. Part of the 50S ribosomal subunit.

Its subcellular location is the plastid. It is found in the chloroplast. This chain is Large ribosomal subunit protein uL2c (rpl2), found in Tetradesmus obliquus (Green alga).